The sequence spans 66 residues: Large ribosomal subunit protein bL33c (66 aa).

This sequence belongs to the bacterial ribosomal protein bL33 family.

The protein localises to the plastid. The protein resides in the chloroplast. The polypeptide is Large ribosomal subunit protein bL33c (Carica papaya (Papaya)).